Reading from the N-terminus, the 84-residue chain is Small ribosomal subunit protein uS17 (84 aa).

The protein belongs to the universal ribosomal protein uS17 family. Part of the 30S ribosomal subunit.

In terms of biological role, one of the primary rRNA binding proteins, it binds specifically to the 5'-end of 16S ribosomal RNA. This is Small ribosomal subunit protein uS17 from Vibrio cholerae serotype O1 (strain ATCC 39541 / Classical Ogawa 395 / O395).